We begin with the raw amino-acid sequence, 588 residues long: MRSAFLSKLQTHAPVAQPQVISSGLAKEAGDLPQEQEVDAEDQLSADAQDGVRKIQATTQVWSKGHLIFAYVMIWVITFVDTMQQGMSNSLLPYVTSSFRLHSLTASTMIMSNIIGGLIKLPLAKVLDIWGRPQGFLIMVGALTIGLVMMAACNNVKTYAAAQVFYWVGYNGMSYTISIFIADTSALKNRALMFAFVSSPYIATVWVGGPLATVFLNGPGFRWGYGAFAIITPAITCPLYAVFAWNYKKAKDAGLLPEKTHSRTFTQSLKHYFFEFDIIGIILLASGLALFLLPFSLYSYQKDQWRSSLVISMIIVGGLLLIAFALYEKYRAPVCFIPFELLFDRTVLGACILAASLFVSFYIWDSYFSSFLQIVNDLSITQASYIVNIYSIGACFWSIIVGILVRWSGRFKWLALYFGVPLTILGVGLMITFRQPDVNIGYIIMCQIFIAFAGGTCVITEQMAVMAATSHQYVAVVLAVESMFANIGGAIGQTVAAAIWTGVFPQRLAEYLPDEAKANATLIYGDLTVQKSYPVGSLERIAINRAYGDGQKYMLIGGTAILAVGLGATMMWRDIKVKDFKQVKGLVV.

The next 13 helical transmembrane spans lie at 60-80, 104-124, 133-153, 161-181, 191-211, 225-245, 278-298, 307-327, 348-368, 385-405, 413-433, 440-460, and 473-495; these read QVWSKGHLIFAYVMIWVITFV, LTASTMIMSNIIGGLIKLPLA, PQGFLIMVGALTIGLVMMAAC, AAQVFYWVGYNGMSYTISIFI, ALMFAFVSSPYIATVWVGGPL, YGAFAIITPAITCPLYAVFAW, IIGIILLASGLALFLLPFSLY, SSLVISMIIVGGLLLIAFALY, LGACILAASLFVSFYIWDSYF, YIVNIYSIGACFWSIIVGILV, WLALYFGVPLTILGVGLMITF, IGYIIMCQIFIAFAGGTCVIT, and YVAVVLAVESMFANIGGAIGQTV. The N-linked (GlcNAc...) asparagine glycan is linked to Asn-519. Residues 552–572 traverse the membrane as a helical segment; that stretch reads KYMLIGGTAILAVGLGATMMW.

It belongs to the major facilitator superfamily.

It is found in the membrane. In terms of biological role, major facilitator transporter involved in siderophore transport. The polypeptide is MFS siderochrome iron transporter 1 (Ajellomyces capsulatus (Darling's disease fungus)).